A 107-amino-acid chain; its full sequence is Proteinase inhibitor I-A (107 aa).

The first 22 residues, 1–22, serve as a signal peptide directing secretion; sequence MVKFAHVVAFLLLASLIQPLTA. A propeptide spanning residues 23 to 36 is cleaved from the precursor; that stretch reads RDLEINVLQLDVSQ.

This sequence belongs to the protease inhibitor I13 (potato type I serine protease inhibitor) family.

The protein localises to the secreted. The protein is Proteinase inhibitor I-A (TIMPB) of Nicotiana tabacum (Common tobacco).